A 470-amino-acid polypeptide reads, in one-letter code: Heparan-sulfate 6-O-sulfotransferase 3 (470 aa).

Topologically, residues 1–4 are cytoplasmic; that stretch reads MDER. A helical; Signal-anchor for type II membrane protein membrane pass occupies residues 5–27; sequence FNKWLLTPVLTLLFVVIMYQYVS. The Lumenal segment spans residues 28–470; that stretch reads PSCTSSCTNF…EDYNSQVVRW (443 aa). Positions 36 to 121 are disordered; the sequence is NFGEQLRSGE…EAPENGSLPR (86 aa). Residues 88–113 show a composition bias toward acidic residues; sequence PEDEDEDPGDPEEEEEEEEEEPDPEA. N-linked (GlcNAc...) asparagine glycosylation is found at N116 and N127. A 3'-phosphoadenylyl sulfate-binding site is contributed by 151 to 159; sequence HIQKTGGTT. Residues 181 to 182, R198, W203, and H208 contribute to the substrate site; that span reads KK. H208 functions as the Proton acceptor in the catalytic mechanism. Residue N230 is glycosylated (N-linked (GlcNAc...) asparagine). 3'-phosphoadenylyl sulfate-binding residues include R244 and S252. Residues H256 and W263 each contribute to the substrate site. 2 N-linked (GlcNAc...) asparagine glycosylation sites follow: N323 and N328. Residue 376 to 378 coordinates 3'-phosphoadenylyl sulfate; sequence TQF. N379 carries an N-linked (GlcNAc...) asparagine glycan. 382-383 contributes to the 3'-phosphoadenylyl sulfate binding site; sequence RA. Residues 421 to 453 form a disordered region; it reads TKQLEHQRDRQKRREERRLQREHRAHRWPKEDR. Over residues 422-439 the composition is skewed to basic and acidic residues; it reads KQLEHQRDRQKRREERRL.

Belongs to the sulfotransferase 6 family. Ubiquitously expressed.

The protein resides in the membrane. The catalysed reaction is alpha-D-glucosaminyl-[heparan sulfate](n) + 3'-phosphoadenylyl sulfate = 6-sulfo-alpha-D-glucosaminyl-[heparan sulfate](n) + adenosine 3',5'-bisphosphate + H(+). Functionally, 6-O-sulfation enzyme which catalyzes the transfer of sulfate from 3'-phosphoadenosine 5'-phosphosulfate (PAPS) to position 6 of the N-sulfoglucosamine residue (GlcNS) of heparan sulfate. The polypeptide is Heparan-sulfate 6-O-sulfotransferase 3 (Hs6st3) (Mus musculus (Mouse)).